The following is a 921-amino-acid chain: Isoleucine--tRNA ligase (921 aa).

Positions 57 to 67 match the 'HIGH' region motif; it reads PYANGELHMGH. Glu552 lines the L-isoleucyl-5'-AMP pocket. The 'KMSKS' region motif lies at 593–597; it reads KMSKS. Lys596 contributes to the ATP binding site. Residues Cys888, Cys891, Cys908, and Cys911 each contribute to the Zn(2+) site.

The protein belongs to the class-I aminoacyl-tRNA synthetase family. IleS type 1 subfamily. As to quaternary structure, monomer. Zn(2+) serves as cofactor.

The protein resides in the cytoplasm. It carries out the reaction tRNA(Ile) + L-isoleucine + ATP = L-isoleucyl-tRNA(Ile) + AMP + diphosphate. Functionally, catalyzes the attachment of isoleucine to tRNA(Ile). As IleRS can inadvertently accommodate and process structurally similar amino acids such as valine, to avoid such errors it has two additional distinct tRNA(Ile)-dependent editing activities. One activity is designated as 'pretransfer' editing and involves the hydrolysis of activated Val-AMP. The other activity is designated 'posttransfer' editing and involves deacylation of mischarged Val-tRNA(Ile). In Listeria welshimeri serovar 6b (strain ATCC 35897 / DSM 20650 / CCUG 15529 / CIP 8149 / NCTC 11857 / SLCC 5334 / V8), this protein is Isoleucine--tRNA ligase.